Reading from the N-terminus, the 128-residue chain is Fluoride-specific ion channel FluC (128 aa).

The next 4 membrane-spanning stretches (helical) occupy residues 5–25, 34–54, 67–87, and 99–119; these read LFIS…GLLF, FGTL…LGLF, FLIT…SEVV, and FCVL…GIWI. Residues glycine 74 and threonine 77 each contribute to the Na(+) site.

The protein belongs to the fluoride channel Fluc/FEX (TC 1.A.43) family.

It localises to the cell inner membrane. It carries out the reaction fluoride(in) = fluoride(out). Its activity is regulated as follows. Na(+) is not transported, but it plays an essential structural role and its presence is essential for fluoride channel function. Functionally, fluoride-specific ion channel. Important for reducing fluoride concentration in the cell, thus reducing its toxicity. This chain is Fluoride-specific ion channel FluC, found in Haemophilus influenzae (strain PittGG).